The chain runs to 256 residues: UstYa family oxidase phomYc (256 aa).

Residues 38-58 (LVLVLQFVLIISLLASLHILG) traverse the membrane as a helical segment. N-linked (GlcNAc...) asparagine glycans are attached at residues N64 and N132. Positions 158–162 (HQLHC) match the HXXHC 1 motif. N-linked (GlcNAc...) asparagine glycosylation occurs at N179. The HXXHC 2 motif lies at 193–197 (HIDHC).

It belongs to the ustYa family.

It is found in the membrane. It functions in the pathway mycotoxin biosynthesis. Functionally, ustYa family oxidase; part of the gene cluster that mediates the biosynthesis of the phomopsins, a group of hexapeptide mycotoxins which infects lupins and causes lupinosis disease in livestock. Within the pathway, phomYc catalyzes the desaturation of the Ile moiety into 2,3-dehydroisoleucine (dIle). The pathway starts with the processing of the precursor phomA by several endopeptidases including kexin proteases as well as the cluster-specific S41 family peptidase phomP1 and the oligopeptidase phomG to produce 10 identical copies of the hexapeptide Tyr-Val-Ile-Pro-Ile-Asp. After being excised from the precursor peptide, the core peptides are cyclized and modified post-translationally by enzymes encoded within the gene cluster. The timing and order of proteolysis of the phomA precursor and PTMs are still unknown. Two tyrosinase-like enzymes, phomQ1 and phomQ2, catalyze the chlorination and hydroxylation of Tyr, respectively. PhomYb, is proposed to be involved in the construction of the macrocyclic structure. The other 4 ustYa family proteins may be involved in PTMs that generate the unique structure of phomopsin A. PhomYa is required for the hydroxylation of C-beta of Tyr. PhomYc, phomYd, and phomYe are responsible for the biosynthesis of 2,3-dehydroisoleucine (dIle), 2,3-dehydroaspartic acid (dAsp), and 3,4-dehydroproline (dPro), respectively. While dIle formation by phomYc is indispensable for the installation of dAsp by phomYd, the order of the other PTMs have not been elucidated yet. Most of the biosynthetic enzymes likely have broad substrate specificity, and thus, there might be a metabolic grid from a precursor to phomopsin A. The enzyme(s) responsible for the biosynthesis of 3,4-dehydrovaline (dVal) have also not been identified yet. Finally, phomM acts as an S-adenosylmethionine-dependent alpha-N-methyltransferase that catalyzes two successive N-methylation reactions, converting N-desmethyl-phomopsin A to phomopsin A and phomopsin A further to an N,N-dimethylated congener called phomopsin E. This chain is UstYa family oxidase phomYc, found in Diaporthe leptostromiformis (Lupinosis disease fungus).